The chain runs to 240 residues: ATP synthase subunit a (240 aa).

Transmembrane regions (helical) follow at residues 41–61, 92–112, 121–141, 152–172, 191–211, and 212–232; these read WLVMAFLFLVSKFTLGNLEII, FFPMIATFALYIAVANLIGLI, SINTTLALTLIVWATHHVIGF, FIGPMKWLVPLMLPIELISNF, VLLGILFGLAGMFFAPLPIMV, and LGVLVSLVQAMVFVLLTVVYF.

It belongs to the ATPase A chain family. As to quaternary structure, F-type ATPases have 2 components, CF(1) - the catalytic core - and CF(0) - the membrane proton channel. CF(1) has five subunits: alpha(3), beta(3), gamma(1), delta(1), epsilon(1). CF(0) has three main subunits: a(1), b(2) and c(9-12). The alpha and beta chains form an alternating ring which encloses part of the gamma chain. CF(1) is attached to CF(0) by a central stalk formed by the gamma and epsilon chains, while a peripheral stalk is formed by the delta and b chains.

The protein localises to the cell inner membrane. In terms of biological role, key component of the proton channel; it plays a direct role in the translocation of protons across the membrane. This Desulfotalea psychrophila (strain LSv54 / DSM 12343) protein is ATP synthase subunit a.